The sequence spans 445 residues: MAITIVSVRARQIFDSRGNPTVEADVKLSDGYLARAAVPRGASTGIYEALELRDGGSDYLGKGVSKAVENVNIIIGPALVGKDPTDQVGIDNFMVQQLDGTVNEWGWCKQKLGANAILAVSLAVCKAGAHVKGIPLYKHVANLAGNKNLVLPVPAFNVINGGSHAGNKLAMQEFMILPVGASSFKEAMKMGAEVYHHLKSVIKKKYGQDATNVGDEGGFAPNIQENKEGLELLKTAIAKAGYTGKVVIGMDVAASEFYGSDKTYDLNFKEENNNGSQKISGDVLKDLYKSFVTEYPIVSIEDPFDQDDWEHYAKLTSEIGVKVQIVGDDLLVTNPKRVEKAIKEKACNALLLKVNQIGSVTESIEAVKMSKRAGWGVMASHRSGETEDTFIADLSVGLATGQIKTGAPCRSERLAKYNQLLRIEEELGAEAVYAGANFRTPVEPY.

Residues His164 and Glu173 each contribute to the substrate site. Glu216 acts as the Proton donor in catalysis. Mg(2+)-binding residues include Asp251, Glu301, and Asp328. The substrate site is built by Glu301 and Asp328. The Proton acceptor role is filled by Lys353. Residues 380–383 and Lys404 each bind substrate; that span reads SHRS.

This sequence belongs to the enolase family. In terms of assembly, homodimer. Mg(2+) is required as a cofactor.

The protein localises to the cytoplasm. It carries out the reaction (2R)-2-phosphoglycerate = phosphoenolpyruvate + H2O. It participates in carbohydrate degradation; glycolysis; pyruvate from D-glyceraldehyde 3-phosphate: step 4/5. The chain is Enolase 2 (ENO2) from Hevea brasiliensis (Para rubber tree).